We begin with the raw amino-acid sequence, 380 residues long: Methylthioribose-1-phosphate isomerase (380 aa).

Residue Asp-257 is the Proton donor of the active site.

It belongs to the eIF-2B alpha/beta/delta subunits family. MtnA subfamily.

It localises to the cytoplasm. The protein resides in the nucleus. It carries out the reaction 5-(methylsulfanyl)-alpha-D-ribose 1-phosphate = 5-(methylsulfanyl)-D-ribulose 1-phosphate. It functions in the pathway amino-acid biosynthesis; L-methionine biosynthesis via salvage pathway; L-methionine from S-methyl-5-thio-alpha-D-ribose 1-phosphate: step 1/6. Its function is as follows. Catalyzes the interconversion of methylthioribose-1-phosphate (MTR-1-P) into methylthioribulose-1-phosphate (MTRu-1-P). The chain is Methylthioribose-1-phosphate isomerase from Naegleria gruberi (Amoeba).